The primary structure comprises 296 residues: tRNA dimethylallyltransferase (296 aa).

2–9 contributes to the ATP binding site; the sequence is GPTASGKT. Residue 4-9 participates in substrate binding; the sequence is TASGKT. Interaction with substrate tRNA regions lie at residues 27–30, 151–155, and 232–237; these read DSAL, QRLSR, and RCVGYR.

It belongs to the IPP transferase family. As to quaternary structure, monomer. It depends on Mg(2+) as a cofactor.

The catalysed reaction is adenosine(37) in tRNA + dimethylallyl diphosphate = N(6)-dimethylallyladenosine(37) in tRNA + diphosphate. Catalyzes the transfer of a dimethylallyl group onto the adenine at position 37 in tRNAs that read codons beginning with uridine, leading to the formation of N6-(dimethylallyl)adenosine (i(6)A). The protein is tRNA dimethylallyltransferase of Shewanella frigidimarina (strain NCIMB 400).